A 69-amino-acid polypeptide reads, in one-letter code: Small, acid-soluble spore protein A (69 aa).

It belongs to the alpha/beta-type SASP family.

SASP are bound to spore DNA. They are double-stranded DNA-binding proteins that cause DNA to change to an a-like conformation. They protect the DNA backbone from chemical and enzymatic cleavage and are thus involved in dormant spore's high resistance to UV light. This chain is Small, acid-soluble spore protein A (sspA), found in Bacillus subtilis (strain 168).